A 209-amino-acid chain; its full sequence is Protein lin-28 homolog A (209 aa).

The segment at 1 to 31 is disordered; the sequence is MGSVSNQQFAGGCAKAAEKAPEEAPPDAARA. Glycine 2 is modified (N-acetylglycine). Phosphoserine is present on serine 3. The 74-residue stretch at 39-112 folds into the CSD domain; sequence HGAGICKWFN…GLESIRVTGP (74 aa). A flexible linker region spans residues 113-136; it reads GGVFCIGSERRPKGKNMQKRRSKG. Serine 120 is subject to Phosphoserine. CCHC-type zinc fingers lie at residues 137-154 and 159-176; these read DRCYNCGGLDHHAKECKL and KKCHFCQSINHMVASCPL. The disordered stretch occupies residues 177-209; sequence KAQQGPSSQGKPAYFREEEEEIHSPALLPEAQN. Serine 200 is subject to Phosphoserine.

This sequence belongs to the lin-28 family. As to quaternary structure, monomer. During skeletal muscle differentiation, associated with translation initiation complexes in the polysomal compartment. Directly interacts with EIF3S2. Interacts with NCL in an RNA-dependent manner. Interacts with TUT4 in the presence of pre-let-7 RNA. In terms of tissue distribution, expressed in embryonic stem cells (ES cells), spermatagonia and testis. Expressed in numerous epithelial tissues including the epithelia of the small intestine, the intralobular duct epithelium of the mammary gland and the epithelia of Henle's loop in the kidney and in the collecting duct (at protein level). Also expressed in the myocardium and skeletal muscle (at protein level).

The protein localises to the cytoplasm. Its subcellular location is the rough endoplasmic reticulum. It is found in the P-body. The protein resides in the stress granule. It localises to the nucleus. The protein localises to the nucleolus. RNA-binding protein that inhibits processing of pre-let-7 miRNAs and regulates translation of mRNAs that control developmental timing, pluripotency and metabolism. Seems to recognize a common structural G-quartet (G4) feature in its miRNA and mRNA targets. 'Translational enhancer' that drives specific mRNAs to polysomes and increases the efficiency of protein synthesis. Its association with the translational machinery and target mRNAs results in an increased number of initiation events per molecule of mRNA and, indirectly, in mRNA stabilization. Binds IGF2 mRNA, MYOD1 mRNA, ARBP/36B4 ribosomal protein mRNA and its own mRNA. Essential for skeletal muscle differentiation program through the translational up-regulation of IGF2 expression. Suppressor of microRNA (miRNA) biogenesis, including that of let-7, miR107, miR-143 and miR-200c. Specifically binds the miRNA precursors (pre-miRNAs), recognizing an 5'-GGAG-3' motif found in pre-miRNA terminal loop, and recruits TUT4 and TUT7 uridylyltransferaseS. This results in the terminal uridylation of target pre-miRNAs. Uridylated pre-miRNAs fail to be processed by Dicer and undergo degradation. The repression of let-7 expression is required for normal development and contributes to maintain the pluripotent state by preventing let-7-mediated differentiation of embryonic stem cells. Localized to the periendoplasmic reticulum area, binds to a large number of spliced mRNAs and inhibits the translation of mRNAs destined for the ER, reducing the synthesis of transmembrane proteins, ER or Golgi lumen proteins, and secretory proteins. Binds to and enhances the translation of mRNAs for several metabolic enzymes, such as PFKP, PDHA1 or SDHA, increasing glycolysis and oxidative phosphorylation. Which, with the let-7 repression may enhance tissue repair in adult tissue. The chain is Protein lin-28 homolog A (Lin28a) from Mus musculus (Mouse).